The following is a 381-amino-acid chain: Cobalt-precorrin-5B C(1)-methyltransferase (381 aa).

The protein belongs to the CbiD family.

It catalyses the reaction Co-precorrin-5B + S-adenosyl-L-methionine = Co-precorrin-6A + S-adenosyl-L-homocysteine. Its pathway is cofactor biosynthesis; adenosylcobalamin biosynthesis; cob(II)yrinate a,c-diamide from sirohydrochlorin (anaerobic route): step 6/10. Its function is as follows. Catalyzes the methylation of C-1 in cobalt-precorrin-5B to form cobalt-precorrin-6A. This chain is Cobalt-precorrin-5B C(1)-methyltransferase, found in Prochlorococcus marinus (strain NATL2A).